Consider the following 297-residue polypeptide: Glycerol-3-phosphate dehydrogenase [NAD(P)+] (297 aa).

NADPH-binding residues include W11, R30, and K79. 3 residues coordinate sn-glycerol 3-phosphate: K79, G107, and S109. NADPH is bound at residue A111. 5 residues coordinate sn-glycerol 3-phosphate: K161, D214, S224, R225, and N226. The Proton acceptor role is filled by K161. NADPH is bound at residue R225. Positions 249 and 251 each coordinate NADPH.

This sequence belongs to the NAD-dependent glycerol-3-phosphate dehydrogenase family.

It localises to the cytoplasm. It catalyses the reaction sn-glycerol 3-phosphate + NAD(+) = dihydroxyacetone phosphate + NADH + H(+). The catalysed reaction is sn-glycerol 3-phosphate + NADP(+) = dihydroxyacetone phosphate + NADPH + H(+). Its pathway is membrane lipid metabolism; glycerophospholipid metabolism. In terms of biological role, catalyzes the reduction of the glycolytic intermediate dihydroxyacetone phosphate (DHAP) to sn-glycerol 3-phosphate (G3P), the key precursor for phospholipid synthesis. This Wolinella succinogenes (strain ATCC 29543 / DSM 1740 / CCUG 13145 / JCM 31913 / LMG 7466 / NCTC 11488 / FDC 602W) (Vibrio succinogenes) protein is Glycerol-3-phosphate dehydrogenase [NAD(P)+].